Consider the following 406-residue polypeptide: uncharacterized protein (406 aa).

Residues 136–153 show a composition bias toward polar residues; the sequence is SQKNWGSEKNWNSPSQGP. The segment at 136-157 is disordered; it reads SQKNWGSEKNWNSPSQGPASRE.

This is an uncharacterized protein from Rattus norvegicus (Rat).